The sequence spans 89 residues: Small ribosomal subunit protein uS15 (89 aa).

The segment at 1–25 (MSLSAEQKGEIVKKHARTASDTGSP) is disordered.

Belongs to the universal ribosomal protein uS15 family. Part of the 30S ribosomal subunit. Forms a bridge to the 50S subunit in the 70S ribosome, contacting the 23S rRNA.

In terms of biological role, one of the primary rRNA binding proteins, it binds directly to 16S rRNA where it helps nucleate assembly of the platform of the 30S subunit by binding and bridging several RNA helices of the 16S rRNA. Functionally, forms an intersubunit bridge (bridge B4) with the 23S rRNA of the 50S subunit in the ribosome. The protein is Small ribosomal subunit protein uS15 of Alkalilimnicola ehrlichii (strain ATCC BAA-1101 / DSM 17681 / MLHE-1).